A 277-amino-acid polypeptide reads, in one-letter code: Elongation factor Ts (277 aa).

The segment at 81 to 84 is involved in Mg(2+) ion dislocation from EF-Tu; that stretch reads TDFV.

This sequence belongs to the EF-Ts family.

Its subcellular location is the cytoplasm. Its function is as follows. Associates with the EF-Tu.GDP complex and induces the exchange of GDP to GTP. It remains bound to the aminoacyl-tRNA.EF-Tu.GTP complex up to the GTP hydrolysis stage on the ribosome. The sequence is that of Elongation factor Ts from Amoebophilus asiaticus (strain 5a2).